A 174-amino-acid polypeptide reads, in one-letter code: Protein C2-DOMAIN ABA-RELATED 6 (174 aa).

The C2 domain occupies M1–H115. Residues R30, D31, D36, D82, K83, D84, and D90 each contribute to the Ca(2+) site.

Belongs to the plant CAR protein family. As to quaternary structure, binds to PYR/PYL/RCAR abscisic acid intracellular receptors in an ABA-independent manner, both at the plasma membrane and in the nucleus. Subunit of a complex made of CAR6, PHOT1 and RPT3/NPH3. Interacts directly with RPT3/NPH3.

It is found in the cell membrane. The protein resides in the nucleus. In terms of biological role, stimulates the GTPase/ATPase activities of Obg-like ATPases. Mediates the transient calcium-dependent interaction of PYR/PYL/RCAR abscisic acid (ABA) receptors with the plasma membrane and thus regulates ABA sensitivity. Prevents hypocotyl bending as well as gravitropic response under blue light conditions. The sequence is that of Protein C2-DOMAIN ABA-RELATED 6 from Arabidopsis thaliana (Mouse-ear cress).